A 125-amino-acid polypeptide reads, in one-letter code: Subtelomeric hrmA-associated cluster protein cgnA (125 aa).

G-Q-I/R/S repeat units follow at residues 11 to 13 (GQI), 14 to 16 (GPI), 17 to 19 (GQR), 20 to 22 (GQS), 23 to 25 (GQR), 26 to 28 (GQS), 29 to 31 (GQR), 32 to 34 (GQS), 35 to 37 (GQI), 38 to 40 (GQS), 41 to 43 (GQS), 44 to 46 (GQS), 47 to 49 (GQS), 50 to 52 (GQS), 53 to 55 (GQI), 56 to 58 (GQI), 59 to 61 (GQI), 62 to 64 (GQI), 65 to 67 (GQI), 68 to 70 (GQI), 71 to 73 (GQI), 74 to 76 (GQI), and 77 to 79 (GQA). Positions 11-79 (GQIGPIGQRG…IGQIGQIGQA (69 aa)) are 23 X 3 AA approximate tandem repeats of G-Q-I/R/S. The segment at 15 to 57 (PIGQRGQSGQRGQSGQRGQSGQIGQSGQSGQSGQSGQSGQIGQ) is disordered.

Its subcellular location is the secreted. Functionally, hypoxia responsive morphology factor that modulates the expression of the subtelomeric hrmA-associated cluster (HAC) containing genes that alter the hyphal surface (such as reduced total chitin or increased beta-glucan exposure) and perturb inter-hyphal interactions within the developing biofilms, resulting in a loss of vertically aligned polarized growing filaments. Consequently, this hypoxia-typic morphotype (called H-MORPH) with altered biofilm architecture leads to increased hypoxia fitness, increased host inflammation, rapid disease progression, and mortality in a murine model of invasive aspergillosis. GcnA is directly involved in the reduction total surface chitin and the increase beta-glucan exposure, and mediates the detachment of the extracellular matrix and especially of its component galactosaminogalactan (GAG). This Aspergillus fumigatus (strain CBS 144.89 / FGSC A1163 / CEA10) (Neosartorya fumigata) protein is Subtelomeric hrmA-associated cluster protein cgnA.